Consider the following 37-residue polypeptide: Cytochrome b6-f complex subunit 5 (37 aa).

The chain crosses the membrane as a helical span at residues 5–25 (LLSGIVLGMIPVTLAGLFVTA).

It belongs to the PetG family. In terms of assembly, the 4 large subunits of the cytochrome b6-f complex are cytochrome b6, subunit IV (17 kDa polypeptide, PetD), cytochrome f and the Rieske protein, while the 4 small subunits are PetG, PetL, PetM and PetN. The complex functions as a dimer.

It is found in the plastid. Its subcellular location is the chloroplast thylakoid membrane. Its function is as follows. Component of the cytochrome b6-f complex, which mediates electron transfer between photosystem II (PSII) and photosystem I (PSI), cyclic electron flow around PSI, and state transitions. PetG is required for either the stability or assembly of the cytochrome b6-f complex. This is Cytochrome b6-f complex subunit 5 from Staurastrum punctulatum (Green alga).